The primary structure comprises 259 residues: Probable transcriptional regulatory protein Noca_2383 (259 aa).

It belongs to the TACO1 family.

The protein localises to the cytoplasm. This chain is Probable transcriptional regulatory protein Noca_2383, found in Nocardioides sp. (strain ATCC BAA-499 / JS614).